The primary structure comprises 496 residues: Genome polyprotein (496 aa).

Residues 1-447 (SRCTHLENRD…HTVLGGAFNS (447 aa)) lie on the Extracellular side of the membrane. Intrachain disulfides connect Cys-3–Cys-30, Cys-60–Cys-116, Cys-60–Cys-121, Cys-74–Cys-105, Cys-92–Cys-116, and Cys-92–Cys-121. The segment at 98-111 (DRGWGNHCGLFGKG) is fusion peptide. The N-linked (GlcNAc...) asparagine; by host glycan is linked to Asn-154. Intrachain disulfides connect Cys-186/Cys-290 and Cys-307/Cys-338. The helical transmembrane segment at 448-468 (IFGGVGFLPKLLMGVALAWLG) threads the bilayer. Topologically, residues 469–479 (LNTRNPTMSMS) are cytoplasmic. Residues 480 to 496 (FLMAGGLVLAMTLGVGA) traverse the membrane as a helical segment.

Homodimer; in the endoplasmic reticulum and Golgi. In terms of processing, N-glycosylated.

Its subcellular location is the virion membrane. It localises to the host endoplasmic reticulum membrane. Functionally, binds to host cell surface receptor and mediates fusion between viral and cellular membranes. Envelope protein is synthesized in the endoplasmic reticulum in the form of heterodimer with protein prM. They play a role in virion budding in the ER, and the newly formed immature particle is covered with 60 spikes composed of heterodimer between precursor prM and envelope protein E. The virion is transported to the Golgi apparatus where the low pH causes dissociation of PrM-E heterodimers and formation of E homodimers. prM-E cleavage is ineficient, and many virions are only partially matured. These uncleaved prM would play a role in immune evasion. This Bos taurus (Bovine) protein is Genome polyprotein.